Here is a 453-residue protein sequence, read N- to C-terminus: Ribosomal protein uS12 methylthiotransferase RimO (453 aa).

Residues 3-118 enclose the MTTase N-terminal domain; it reads KKVGIISLGC…IAKVIEEFYS (116 aa). Residues C12, C48, C81, C162, C166, and C169 each contribute to the [4Fe-4S] cluster site. Positions 148 to 378 constitute a Radical SAM core domain; it reads STNSGYAYLK…MQLQKEIVQR (231 aa). Residues 381–449 form the TRAM domain; the sequence is ESRLEKVYKT…DYDLIGEVIN (69 aa).

Belongs to the methylthiotransferase family. RimO subfamily. [4Fe-4S] cluster serves as cofactor.

It localises to the cytoplasm. It carries out the reaction L-aspartate(89)-[ribosomal protein uS12]-hydrogen + (sulfur carrier)-SH + AH2 + 2 S-adenosyl-L-methionine = 3-methylsulfanyl-L-aspartate(89)-[ribosomal protein uS12]-hydrogen + (sulfur carrier)-H + 5'-deoxyadenosine + L-methionine + A + S-adenosyl-L-homocysteine + 2 H(+). Its function is as follows. Catalyzes the methylthiolation of an aspartic acid residue of ribosomal protein uS12. The polypeptide is Ribosomal protein uS12 methylthiotransferase RimO (Acetivibrio thermocellus (strain ATCC 27405 / DSM 1237 / JCM 9322 / NBRC 103400 / NCIMB 10682 / NRRL B-4536 / VPI 7372) (Clostridium thermocellum)).